We begin with the raw amino-acid sequence, 2230 residues long: DNA polymerase epsilon catalytic subunit A (2230 aa).

Residues 1–19 (MPTRQPSKYGNKFRSSSAS) are compositionally biased toward polar residues. The segment at 1–24 (MPTRQPSKYGNKFRSSSASFKPKR) is disordered. Zn(2+)-binding residues include Cys2101, Cys2104, Cys2136, and Cys2139. The CysA-type zinc-finger motif lies at 2101-2139 (CNACCLIRDLDLCRDEDVLPEMGSDPNKAAPKPWRCPFC). Residues Cys2170, Cys2173, Cys2185, and Cys2187 each contribute to the [4Fe-4S] cluster site. A CysB motif motif is present at residues 2170–2187 (CSKCGGLKISDFMEHCSC).

The protein belongs to the DNA polymerase type-B family. Heterotetramer. Consists of 4 subunits: pol2, dpb2, dpb3 and dpb4. [4Fe-4S] cluster serves as cofactor.

It is found in the nucleus. It carries out the reaction DNA(n) + a 2'-deoxyribonucleoside 5'-triphosphate = DNA(n+1) + diphosphate. Its function is as follows. DNA polymerase II participates in chromosomal DNA replication. The sequence is that of DNA polymerase epsilon catalytic subunit A (pol2) from Aspergillus fumigatus (strain ATCC MYA-4609 / CBS 101355 / FGSC A1100 / Af293) (Neosartorya fumigata).